A 149-amino-acid polypeptide reads, in one-letter code: MIKEFKEFIMRGSVLDLAVGVVIGSAFTAIVTQVVEGLITPLISLIFVLTTGKKSADDALGALVYKVEGVEFNIGSVISALITFLITAFVLFLIVKAANKMKNRGKKEEAAEEEVVPTSEDYLKEIRDLLAAQTPPAETVKTDSTFTEK.

The next 2 membrane-spanning stretches (helical) occupy residues 8–28 and 74–94; these read FIMRGSVLDLAVGVVIGSAFT and IGSVISALITFLITAFVLFLI.

This sequence belongs to the MscL family. As to quaternary structure, homopentamer.

Its subcellular location is the cell membrane. Its function is as follows. Channel that opens in response to stretch forces in the membrane lipid bilayer. May participate in the regulation of osmotic pressure changes within the cell. The chain is Large-conductance mechanosensitive channel from Enterococcus faecalis (strain ATCC 700802 / V583).